Consider the following 510-residue polypeptide: GTPase Der (510 aa).

EngA-type G domains lie at 4 to 168 (PVVA…AEKM) and 222 to 395 (IKIA…ACAT). Residues 10 to 17 (GRPNVGKS), 57 to 61 (DTGGI), 120 to 123 (NKTD), 228 to 235 (GRPNVGKS), 275 to 279 (DTAGV), and 340 to 343 (NKWD) contribute to the GTP site. Residues 396 to 480 (QKMTTSMLTR…PIRLLFQEGN (85 aa)) form the KH-like domain.

This sequence belongs to the TRAFAC class TrmE-Era-EngA-EngB-Septin-like GTPase superfamily. EngA (Der) GTPase family. As to quaternary structure, associates with the 50S ribosomal subunit.

GTPase that plays an essential role in the late steps of ribosome biogenesis. The sequence is that of GTPase Der from Pasteurella multocida (strain Pm70).